We begin with the raw amino-acid sequence, 274 residues long: Glutamate--cysteine ligase regulatory subunit (274 aa).

S59 is modified (phosphoserine). Position 263 is an N6-acetyllysine (K263).

This sequence belongs to the aldo/keto reductase family. Glutamate--cysteine ligase light chain subfamily. Heterodimer of a catalytic heavy chain and a regulatory light chain.

Its pathway is sulfur metabolism; glutathione biosynthesis; glutathione from L-cysteine and L-glutamate: step 1/2. The polypeptide is Glutamate--cysteine ligase regulatory subunit (GCLM) (Bos taurus (Bovine)).